We begin with the raw amino-acid sequence, 538 residues long: Chaperonin GroEL (538 aa).

Residues 29 to 32 (TLGP), 86 to 90 (DGTTT), G413, 479 to 481 (DAL), and D495 contribute to the ATP site.

This sequence belongs to the chaperonin (HSP60) family. As to quaternary structure, forms a cylinder of 14 subunits composed of two heptameric rings stacked back-to-back. Interacts with the co-chaperonin GroES.

It localises to the cytoplasm. It catalyses the reaction ATP + H2O + a folded polypeptide = ADP + phosphate + an unfolded polypeptide.. Together with its co-chaperonin GroES, plays an essential role in assisting protein folding. The GroEL-GroES system forms a nano-cage that allows encapsulation of the non-native substrate proteins and provides a physical environment optimized to promote and accelerate protein folding. The chain is Chaperonin GroEL from Thermotoga neapolitana.